The following is a 1403-amino-acid chain: DNA-directed RNA polymerase subunit beta' (1403 aa).

Zn(2+) contacts are provided by Cys71, Cys73, Cys86, and Cys89. Residues Asp462, Asp464, and Asp466 each coordinate Mg(2+). Residues Cys811, Cys885, Cys892, and Cys895 each coordinate Zn(2+).

It belongs to the RNA polymerase beta' chain family. As to quaternary structure, the RNAP catalytic core consists of 2 alpha, 1 beta, 1 beta' and 1 omega subunit. When a sigma factor is associated with the core the holoenzyme is formed, which can initiate transcription. Mg(2+) serves as cofactor. Requires Zn(2+) as cofactor.

The enzyme catalyses RNA(n) + a ribonucleoside 5'-triphosphate = RNA(n+1) + diphosphate. DNA-dependent RNA polymerase catalyzes the transcription of DNA into RNA using the four ribonucleoside triphosphates as substrates. The polypeptide is DNA-directed RNA polymerase subunit beta' (Bartonella bacilliformis (strain ATCC 35685 / KC583 / Herrer 020/F12,63)).